Consider the following 383-residue polypeptide: S-adenosylmethionine synthase (383 aa).

His15 is an ATP binding site. Residue Asp17 participates in Mg(2+) binding. Glu43 is a K(+) binding site. Positions 56 and 99 each coordinate L-methionine. Residues 99-109 (QSPDINQGVDR) form a flexible loop region. Residues 164-166 (DAK), 230-231 (RF), Asp239, 245-246 (RK), Ala262, and Lys266 contribute to the ATP site. Asp239 contacts L-methionine. An L-methionine-binding site is contributed by Lys270.

It belongs to the AdoMet synthase family. In terms of assembly, homotetramer; dimer of dimers. Mg(2+) is required as a cofactor. K(+) serves as cofactor.

The protein localises to the cytoplasm. The enzyme catalyses L-methionine + ATP + H2O = S-adenosyl-L-methionine + phosphate + diphosphate. Its pathway is amino-acid biosynthesis; S-adenosyl-L-methionine biosynthesis; S-adenosyl-L-methionine from L-methionine: step 1/1. Catalyzes the formation of S-adenosylmethionine (AdoMet) from methionine and ATP. The overall synthetic reaction is composed of two sequential steps, AdoMet formation and the subsequent tripolyphosphate hydrolysis which occurs prior to release of AdoMet from the enzyme. The chain is S-adenosylmethionine synthase from Shewanella oneidensis (strain ATCC 700550 / JCM 31522 / CIP 106686 / LMG 19005 / NCIMB 14063 / MR-1).